Reading from the N-terminus, the 404-residue chain is Probable protein phosphatase 2C 30 (404 aa).

The span at 42-52 shows a compositional bias: basic and acidic residues; that stretch reads AERGAEEETSG. Residues 42-72 are disordered; the sequence is AERGAEEETSGKRRRLDGGGGEASTDEEDRE. A PPM-type phosphatase domain is found at 77–399; the sequence is RYGFTSVCGR…DNVSVVVVNL (323 aa). Positions 111, 112, and 298 each coordinate Mn(2+). Positions 321-369 are disordered; it reads GRRERNRSSPTSNLSPRQSSSSGDEAPNDGAPSAAAGSESDEESAAEED. Residues 330 to 343 show a composition bias toward polar residues; sequence PTSNLSPRQSSSSG. Asp390 is a Mn(2+) binding site.

The protein belongs to the PP2C family. Interacts with PYL5 and SAPK2. Binding to PYL5 is dependent on the presence of abscisic acid (ABA). Interacts with PYL3, PYL5 and PYL9. Binding to PYL5 and PYL9 is dependent on the presence of ABA. Mg(2+) is required as a cofactor. The cofactor is Mn(2+).

The protein resides in the nucleus. It catalyses the reaction O-phospho-L-seryl-[protein] + H2O = L-seryl-[protein] + phosphate. The enzyme catalyses O-phospho-L-threonyl-[protein] + H2O = L-threonyl-[protein] + phosphate. In terms of biological role, together with ABI5, PYL5 and SAPK2, is part of an abscisic acid (ABA) signaling unit that modulates seed germination and early seedling growth. The sequence is that of Probable protein phosphatase 2C 30 from Oryza sativa subsp. japonica (Rice).